The following is a 122-amino-acid chain: uncharacterized protein (122 aa).

The next 3 membrane-spanning stretches (helical) occupy residues 21–40, 57–77, and 94–114; these read VWSW…SIAI, YTHM…CICI, and LLFS…YCIY.

The protein localises to the membrane. This is an uncharacterized protein from Saccharomyces cerevisiae (strain ATCC 204508 / S288c) (Baker's yeast).